The primary structure comprises 214 residues: 3-isopropylmalate dehydratase small subunit (214 aa).

It belongs to the LeuD family. LeuD type 1 subfamily. As to quaternary structure, heterodimer of LeuC and LeuD.

It catalyses the reaction (2R,3S)-3-isopropylmalate = (2S)-2-isopropylmalate. It functions in the pathway amino-acid biosynthesis; L-leucine biosynthesis; L-leucine from 3-methyl-2-oxobutanoate: step 2/4. Functionally, catalyzes the isomerization between 2-isopropylmalate and 3-isopropylmalate, via the formation of 2-isopropylmaleate. The chain is 3-isopropylmalate dehydratase small subunit from Alcanivorax borkumensis (strain ATCC 700651 / DSM 11573 / NCIMB 13689 / SK2).